A 170-amino-acid polypeptide reads, in one-letter code: Mediator of RNA polymerase II transcription subunit 10 (170 aa).

Belongs to the Mediator complex subunit 10 family. As to quaternary structure, component of the Mediator complex.

It localises to the nucleus. In terms of biological role, component of the Mediator complex, a coactivator involved in the regulated transcription of nearly all RNA polymerase II-dependent genes. Mediator functions as a bridge to convey information from gene-specific regulatory proteins to the basal RNA polymerase II transcription machinery. Mediator is recruited to promoters by direct interactions with regulatory proteins and serves as a scaffold for the assembly of a functional preinitiation complex with RNA polymerase II and the general transcription factors. This Candida albicans (strain SC5314 / ATCC MYA-2876) (Yeast) protein is Mediator of RNA polymerase II transcription subunit 10 (NUT2).